Here is a 463-residue protein sequence, read N- to C-terminus: Fumarate hydratase class II (463 aa).

Substrate-binding positions include 97–99, 128–131, 138–140, and T186; these read SGT, HPND, and SSN. Residue H187 is the Proton donor/acceptor of the active site. Residue S317 is part of the active site. Residues S318 and 323-325 each bind substrate; that span reads KVN.

Belongs to the class-II fumarase/aspartase family. Fumarase subfamily. In terms of assembly, homotetramer.

It localises to the cytoplasm. The enzyme catalyses (S)-malate = fumarate + H2O. Its pathway is carbohydrate metabolism; tricarboxylic acid cycle; (S)-malate from fumarate: step 1/1. Involved in the TCA cycle. Catalyzes the stereospecific interconversion of fumarate to L-malate. The polypeptide is Fumarate hydratase class II (Helicobacter pylori (strain ATCC 700392 / 26695) (Campylobacter pylori)).